The sequence spans 529 residues: UDP-glucuronosyltransferase 2B28 (529 aa).

The signal sequence occupies residues 1-24 (MALKWTSVLLLIHLGCYFSSGSCG). K135 bears the N6-succinyllysine mark. N-linked (GlcNAc...) asparagine glycosylation occurs at N315. Residues 495 to 517 (GFLLACVATVIFVVTKFCLFCFW) form a helical membrane-spanning segment.

The protein belongs to the UDP-glycosyltransferase family. Expressed in the liver, breast and kidney.

The protein localises to the endoplasmic reticulum membrane. The protein resides in the cytoplasm. It is found in the perinuclear region. The catalysed reaction is glucuronate acceptor + UDP-alpha-D-glucuronate = acceptor beta-D-glucuronoside + UDP + H(+). In terms of biological role, UDP-glucuronosyltransferase (UGT) that catalyzes phase II biotransformation reactions in which lipophilic substrates are conjugated with glucuronic acid to increase the metabolite's water solubility, thereby facilitating excretion into either the urine or bile. Essential for the elimination and detoxification of drugs, xenobiotics and endogenous compounds. Catalyzes the glucuronidation of endogenous steroid hormones such as androgens (androsterone, 3alpha-androstanediol) and estrogens (estradiol, estrone). Catalyzes the glucuronidation of bile acid substrates, which are natural detergents for dietary lipids absorption. Displays glucuronidation activity toward the phenolic compounds eugenol. Its function is as follows. Lack UDP-glucuronosyltransferase (UGT) activity. The polypeptide is UDP-glucuronosyltransferase 2B28 (Homo sapiens (Human)).